The following is a 989-amino-acid chain: Cellulose synthase A catalytic subunit 4 [UDP-forming] (989 aa).

Residues 1-184 (MMESGVPPCA…SRIIPISKNK (184 aa)) are Cytoplasmic-facing. Positions 9, 12, 20, 23, 28, 31, 43, and 46 each coordinate Zn(2+). The segment at 9–47 (CAACGDDAHAACRACSYALCKACLDEDAAEGRTTCARCG) adopts an RING-type; degenerate zinc-finger fold. Residues 138 to 149 (KKEKKASAKKAA) show a composition bias toward basic residues. The disordered stretch occupies residues 138 to 158 (KKEKKASAKKAAAKAQAPPVE). The helical transmembrane segment at 185 to 205 (LTPYRAVIIMRLVVLGLFFHY) threads the bilayer. Topologically, residues 206 to 213 (RITNPVYS) are extracellular. The chain crosses the membrane as a helical span at residues 214–234 (AFGLWMTSVICEIWFGFSWIL). At 235–772 (DQFPKWCPIN…INTIVYPFTS (538 aa)) the chain is on the cytoplasmic side. Positions 272, 278, 279, and 308 each coordinate UDP-alpha-D-glucose. Residue aspartate 308 is part of the active site. A coiled-coil region spans residues 362–389 (VKERRAMKRDYEEYKVRINALVAKAQKT). Lysine 449 is a UDP-alpha-D-glucose binding site. Mn(2+) contacts are provided by lysine 450 and aspartate 474. Aspartate 688 is an active-site residue. The helical transmembrane segment at 773–793 (LPLIAYCCLPAICLLTGKFII) threads the bilayer. Residues 794–798 (PTLSN) are Extracellular-facing. Residues 799 to 819 (AATIWFLGLFISIIVTSVLEL) form a helical membrane-spanning segment. The Cytoplasmic segment spans residues 820–835 (RWSGIGIEDWWRNEQF). A helical transmembrane segment spans residues 836 to 856 (WVIGGVSAHLFAVFQGILKMI). Topologically, residues 857-884 (AGLDTNFTVTAKATDDTEFGELYVFKWT) are extracellular. The N-linked (GlcNAc...) asparagine glycan is linked to asparagine 862. A helical membrane pass occupies residues 885–905 (TVLIPPTSILVLNLVGVVAGF). The Cytoplasmic segment spans residues 906–916 (SDALNSGYESW). The helical transmembrane segment at 917 to 937 (GPLFGKVFFAMWVIMHLYPFL) threads the bilayer. Over 938–946 (KGLMGRQNR) the chain is Extracellular. A helical membrane pass occupies residues 947–967 (TPTIVVLWSVLLASVFSLLWV). At 968–989 (KIDPFIGSSETTTTNSCANFDC) the chain is on the cytoplasmic side.

This sequence belongs to the glycosyltransferase 2 family. Plant cellulose synthase subfamily. It depends on Mn(2+) as a cofactor. Zn(2+) serves as cofactor.

The protein resides in the cell membrane. It carries out the reaction [(1-&gt;4)-beta-D-glucosyl](n) + UDP-alpha-D-glucose = [(1-&gt;4)-beta-D-glucosyl](n+1) + UDP + H(+). The protein operates within glycan metabolism; plant cellulose biosynthesis. Functionally, catalytic subunit of cellulose synthase terminal complexes ('rosettes'), required for beta-1,4-glucan microfibril crystallization, a major mechanism of the cell wall formation. Involved in the secondary cell wall formation. This is Cellulose synthase A catalytic subunit 4 [UDP-forming] (CESA4) from Oryza sativa subsp. indica (Rice).